The sequence spans 101 residues: Apolipoprotein C-II (101 aa).

A signal peptide spans 1–22 (MGTRFLLALFLVLLVLGFEVQG). A lipid binding region spans residues 66–74 (TVDEKLRDM). The lipoprotein lipase cofactor stretch occupies residues 78 to 101 (STAAMSTYAGILTDQVLSMLKGEE).

It belongs to the apolipoprotein C2 family. Proapolipoprotein C-II is synthesized as a sialic acid containing glycoprotein which is subsequently desialylated prior to its proteolytic processing. In terms of processing, proapolipoprotein C-II, the major form found in plasma undergoes proteolytic cleavage of its N-terminal hexapeptide to generate apolipoprotein C-II, which occurs as the minor form in plasma.

The protein resides in the secreted. Functionally, component of chylomicrons, very low-density lipoproteins (VLDL), low-density lipoproteins (LDL), and high-density lipoproteins (HDL) in plasma. Plays an important role in lipoprotein metabolism as an activator of lipoprotein lipase. Both proapolipoprotein C-II and apolipoprotein C-II can activate lipoprotein lipase. In Aotus nancymaae (Ma's night monkey), this protein is Apolipoprotein C-II (APOC2).